A 534-amino-acid chain; its full sequence is MFS transporter fmqE (534 aa).

12 consecutive transmembrane segments (helical) span residues 48–68, 109–129, 136–156, 169–189, 194–214, 228–248, 326–346, 349–369, 379–399, 407–427, 447–467, and 478–498; these read LLLF…VCAS, LWTS…GFLA, WTAV…VFSS, GAVV…VAPI, ALLQ…LGIV, IVFG…FLVP, AIGV…GLNV, VFDI…LGWL, LWLW…ALGF, LAIA…TVGV, VAFI…PYMY, and TGFV…FLVP.

This sequence belongs to the major facilitator superfamily. Sugar transporter (TC 2.A.1.1) family.

Its subcellular location is the cytoplasmic vesicle membrane. MFS transporter; part of the gene cluster that mediates the biosynthesis of the antitumor cytotoxic peptidyl alkaloids fumiquinazolines that confer a dual-usage capability to defend against phagocytes in the environment and animal hosts. Probably involved in fumiquinazolines metabolism and transport. The polypeptide is MFS transporter fmqE (Aspergillus fumigatus (strain ATCC MYA-4609 / CBS 101355 / FGSC A1100 / Af293) (Neosartorya fumigata)).